Here is a 364-residue protein sequence, read N- to C-terminus: Dual-specificity RNA methyltransferase RlmN (364 aa).

Residue glutamate 91 is the Proton acceptor of the active site. A Radical SAM core domain is found at 97–333; that stretch reads ESDRGTLCIS…VTVRKTRGDD (237 aa). Cysteine 104 and cysteine 338 form a disulfide bridge. Positions 111, 115, and 118 each coordinate [4Fe-4S] cluster. Residues 164–165, serine 196, 218–220, and asparagine 295 contribute to the S-adenosyl-L-methionine site; these read GE and SLH. The S-methylcysteine intermediate role is filled by cysteine 338.

The protein belongs to the radical SAM superfamily. RlmN family. Requires [4Fe-4S] cluster as cofactor.

It is found in the cytoplasm. It catalyses the reaction adenosine(2503) in 23S rRNA + 2 reduced [2Fe-2S]-[ferredoxin] + 2 S-adenosyl-L-methionine = 2-methyladenosine(2503) in 23S rRNA + 5'-deoxyadenosine + L-methionine + 2 oxidized [2Fe-2S]-[ferredoxin] + S-adenosyl-L-homocysteine. It carries out the reaction adenosine(37) in tRNA + 2 reduced [2Fe-2S]-[ferredoxin] + 2 S-adenosyl-L-methionine = 2-methyladenosine(37) in tRNA + 5'-deoxyadenosine + L-methionine + 2 oxidized [2Fe-2S]-[ferredoxin] + S-adenosyl-L-homocysteine. In terms of biological role, specifically methylates position 2 of adenine 2503 in 23S rRNA and position 2 of adenine 37 in tRNAs. m2A2503 modification seems to play a crucial role in the proofreading step occurring at the peptidyl transferase center and thus would serve to optimize ribosomal fidelity. This is Dual-specificity RNA methyltransferase RlmN from Neisseria meningitidis serogroup A / serotype 4A (strain DSM 15465 / Z2491).